The chain runs to 137 residues: Proofreading thioesterase EntH (137 aa).

Residue Glu-63 is the Nucleophile or proton acceptor of the active site.

The protein belongs to the thioesterase PaaI family. In terms of assembly, homotetramer. Dimer of dimers. Interacts specifically with the aryl carrier protein (ArCP) domain of EntB.

It is found in the cytoplasm. The protein operates within siderophore biosynthesis; enterobactin biosynthesis. Its function is as follows. Required for optimal enterobactin synthesis. Acts as a proofreading enzyme that prevents EntB misacylation by hydrolyzing the thioester bound existing between EntB and wrongly charged molecules. This chain is Proofreading thioesterase EntH (entH), found in Klebsiella pneumoniae subsp. pneumoniae (strain ATCC 700721 / MGH 78578).